We begin with the raw amino-acid sequence, 354 residues long: Uroporphyrinogen decarboxylase (354 aa).

Substrate is bound by residues 27-31 (RQAGR), D77, Y154, S209, and H327.

It belongs to the uroporphyrinogen decarboxylase family. In terms of assembly, homodimer.

It localises to the cytoplasm. It carries out the reaction uroporphyrinogen III + 4 H(+) = coproporphyrinogen III + 4 CO2. It participates in porphyrin-containing compound metabolism; protoporphyrin-IX biosynthesis; coproporphyrinogen-III from 5-aminolevulinate: step 4/4. Functionally, catalyzes the decarboxylation of four acetate groups of uroporphyrinogen-III to yield coproporphyrinogen-III. The polypeptide is Uroporphyrinogen decarboxylase (Shewanella baltica (strain OS223)).